The sequence spans 436 residues: KICSTOR complex protein kaptin (436 aa).

Residue methionine 1 is modified to N-acetylmethionine.

In terms of assembly, part of the KICSTOR complex composed of KPTN, ITFG2, KICS2 and SZT2. SZT2 probably serves as a link between the other three proteins in the KICSTOR complex and mediates the direct interaction with the GATOR1 complex. May associate with F-actin filaments.

It is found in the lysosome membrane. The protein resides in the cell projection. The protein localises to the lamellipodium. It localises to the stereocilium. Its function is as follows. As part of the KICSTOR complex functions in the amino acid-sensing branch of the TORC1 signaling pathway. Recruits, in an amino acid-independent manner, the GATOR1 complex to the lysosomal membranes and allows its interaction with GATOR2 and the RAG GTPases. Functions upstream of the RAG GTPases and is required to negatively regulate mTORC1 signaling in absence of amino acids. In absence of the KICSTOR complex mTORC1 is constitutively localized to the lysosome and activated. The KICSTOR complex is also probably involved in the regulation of mTORC1 by glucose. The protein is KICSTOR complex protein kaptin of Homo sapiens (Human).